The primary structure comprises 359 residues: Src kinase-associated phosphoprotein 1 (359 aa).

In terms of domain architecture, PH spans 107–210 (NVIKQGYLEK…WVDQISFLLK (104 aa)). 3 positions are modified to phosphotyrosine: tyrosine 142, tyrosine 219, and tyrosine 232. The span at 219–237 (YEEDEEEEEKEETYDDIDG) shows a compositional bias: acidic residues. A disordered region spans residues 219–239 (YEEDEEEEEKEETYDDIDGFD). Residues tyrosine 271 and tyrosine 295 each carry the phosphotyrosine; by FYN modification. Positions 290–295 (RKGVDY) are interaction with FYB1. The SH3 domain occupies 294–355 (DYASYYQGLW…PKEYLTTAFE (62 aa)).

This sequence belongs to the SKAP family. As to quaternary structure, homodimer. Interacts with FYN. Interacts with PTPRC. Interacts with GRB2 when phosphorylated on Tyr-271. Interacts with FYB1, which is required for SKAP2 protein stability. Part of a complex consisting of SKAP1, FYB1 and CLNK. Interacts with RASGRP1. Interacts with FYB2. In terms of processing, phosphorylated on tyrosines. Phosphorylation by FYN on Tyr-271 is required for GRB2 interaction. Phosphorylation by FYN on Tyr-295 abolishes interaction with FYB1. Tyr-232 is dephosphorylated by PTPRC. Highly expressed in thymocytes and peripheral blood lymphocytes. Also expressed in spleen cells and testis. Present in T-cells (at protein level).

The protein localises to the cytoplasm. It localises to the nucleus. Its subcellular location is the cell membrane. Functionally, positively regulates T-cell receptor signaling by enhancing the MAP kinase pathway. Required for optimal conjugation between T-cells and antigen-presenting cells by promoting the clustering of integrin ITGAL on the surface of T-cells. May be involved in high affinity immunoglobulin epsilon receptor signaling in mast cells. The protein is Src kinase-associated phosphoprotein 1 (SKAP1) of Homo sapiens (Human).